The chain runs to 287 residues: Inorganic pyrophosphatase (287 aa).

R79 lines the diphosphate pocket. Residues D116, D121, and D153 each contribute to the Mg(2+) site.

This sequence belongs to the PPase family. In terms of assembly, homodimer. Mg(2+) serves as cofactor.

The protein localises to the cytoplasm. It catalyses the reaction diphosphate + H2O = 2 phosphate + H(+). The polypeptide is Inorganic pyrophosphatase (IPP1) (Kluyveromyces lactis (strain ATCC 8585 / CBS 2359 / DSM 70799 / NBRC 1267 / NRRL Y-1140 / WM37) (Yeast)).